A 382-amino-acid polypeptide reads, in one-letter code: Mannitol-1-phosphate 5-dehydrogenase (382 aa).

3-14 is a binding site for NAD(+); the sequence is ALHFGAGNIGRG.

Belongs to the mannitol dehydrogenase family.

The enzyme catalyses D-mannitol 1-phosphate + NAD(+) = beta-D-fructose 6-phosphate + NADH + H(+). The polypeptide is Mannitol-1-phosphate 5-dehydrogenase (Salmonella enteritidis PT4 (strain P125109)).